Here is a 172-residue protein sequence, read N- to C-terminus: 18.6 kDa class III heat shock protein (172 aa).

A disordered region spans residues 29–54 (RRSAGDHAHHAAHGHGQHRISGIGGG). The sHSP domain occupies 48-172 (ISGIGGGAPV…KTKSVQVTIA (125 aa)).

This sequence belongs to the small heat shock protein (HSP20) family. As to quaternary structure, may form oligomeric structures.

The protein localises to the cytoplasm. This is 18.6 kDa class III heat shock protein (HSP18.6) from Oryza sativa subsp. japonica (Rice).